The primary structure comprises 807 residues: Mechanosensitive cation channel TMEM63A (807 aa).

Topologically, residues 1–51 (MMDSPFLELWQSKAVSIREQLGLGDRPNDSYCYNSAKNSTVLQGVTFGGIP) are extracellular. N38 carries N-linked (GlcNAc...) asparagine glycosylation. Residues 52–74 (TVLLIDVSCFLFLILVFSIIRRR) form a helical membrane-spanning segment. The Cytoplasmic portion of the chain corresponds to 75-134 (FWDYGRIALVSEADSESRFQRLSSTSSSGQQDFENELGCCPWLTAIFRLHDDQILEWCGE). A helical transmembrane segment spans residues 135–167 (DAIHYLSFQRHIIFLLVVVSFLSLCVILPVNLS). The Extracellular segment spans residues 168–191 (GDLLDKDPYSFGRTTIANLQTDND). The helical transmembrane segment at 192-217 (LLWLHTIFAVIYLFLTVGFMRHHTQS) threads the bilayer. The Cytoplasmic portion of the chain corresponds to 218–416 (IKYKEENLVR…CWKNLSIQGL (199 aa)). Residues 219-414 (KYKEENLVRR…DICWKNLSIQ (196 aa)) form an intracellular linker IL2; confers mechanosensitivity region. The chain crosses the membrane as a helical span at residues 417–444 (RWWLQWLGINFTLFLGLFFLTTPSIILS). The Extracellular portion of the chain corresponds to 445–462 (TMDKFNVTKPIHALNNPI). N-linked (GlcNAc...) asparagine glycosylation occurs at N450. The chain crosses the membrane as a helical span at residues 463–490 (ISQFFPTLLLWSFSALLPSIVYYSTLLE). Over 491–495 (SHWTK) the chain is Cytoplasmic. A helical membrane pass occupies residues 496–532 (SGENQIMMTKVYIFLIFMVLILPSLGLTSLDFFFRWL). At 533 to 554 (FDKTSSEASIRLECVFLPDQGA) the chain is on the extracellular side. Residues 555–586 (FFVNYVIASAFIGNGMELLRLPGLILYTFRMI) form a helical membrane-spanning segment. The gating helix stretch occupies residues 555–586 (FFVNYVIASAFIGNGMELLRLPGLILYTFRMI). Residues 587–606 (MAKTAADRRNVKQNQAFQYE) are Cytoplasmic-facing. Residues 607-624 (FGAMYAWMLCVFTVIVAY) traverse the membrane as a helical segment. Residues 625–628 (SITC) are Extracellular-facing. The helical transmembrane segment at 629-651 (PIIAPFGLIYILLKHMVDRHNLY) threads the bilayer. Topologically, residues 652–661 (FVYLPAKLEK) are cytoplasmic. A helical membrane pass occupies residues 662–689 (GIHFAAVNQALAAPILCLFWLYFFSFLR). The Extracellular segment spans residues 690–694 (LGMKA). A helical membrane pass occupies residues 695–709 (PATLFTFLVLLLTIL). At 710-807 (VCLAHTCFGC…GSVAAAPQEA (98 aa)) the chain is on the cytoplasmic side. S739 bears the Phosphoserine mark.

The protein belongs to the CSC1 (TC 1.A.17) family. As to quaternary structure, monomer. N-Glycosylated.

The protein resides in the lysosome membrane. It is found in the early endosome membrane. The protein localises to the cell membrane. The enzyme catalyses Ca(2+)(in) = Ca(2+)(out). Its function is as follows. Mechanosensitive cation channel with low conductance and high activation threshold. In contrast to TMEM63B, does not show phospholipid scramblase activity. Acts as a regulator of lysosomal morphology by mediating lysosomal mechanosensitivity. Important for the baby's first breath and respiration throughout life. Upon lung inflation conducts cation currents in alveolar type 1 and 2 cells triggering lamellar body exocytosis and surfactant secretion into airspace. Also acts as an osmosensitive cation channel preferentially activated by hypotonic stress. This chain is Mechanosensitive cation channel TMEM63A, found in Homo sapiens (Human).